The following is a 544-amino-acid chain: Probable protein kinase UbiB (544 aa).

A Protein kinase domain is found at 123 to 501 (EFDIKPLASA…KRQQATGKFL (379 aa)). ATP is bound by residues 129–137 (LASASIAQV) and K152. Catalysis depends on D287, which acts as the Proton acceptor. The next 2 membrane-spanning stretches (helical) occupy residues 496–516 (ATGK…AILV) and 519–539 (AYEQ…LLSW).

It belongs to the ABC1 family. UbiB subfamily.

The protein localises to the cell inner membrane. Its pathway is cofactor biosynthesis; ubiquinone biosynthesis [regulation]. In terms of biological role, is probably a protein kinase regulator of UbiI activity which is involved in aerobic coenzyme Q (ubiquinone) biosynthesis. The protein is Probable protein kinase UbiB of Vibrio parahaemolyticus serotype O3:K6 (strain RIMD 2210633).